The chain runs to 229 residues: MLICIPDVLSKDEVAEFRRIMDAAEWEDGRSTAGAQSAMVKRNEQLPPDGEAARMLGQRIITALTRNPRFLSAAVPLQIFPPLFNRYTASRGDHFGIHVDNAVRGDPLTGLRIRTDLSMTLFLAEPDTYDGGELVIEDTYGSHEVKLPAGHAVLYPSSSLHMVTPVTRGARVASFFWMQSMIRDAHVRSMIFDLDTAIQSLTERLGRDDPDAVKLTGIYHNLIRQWAEV.

The Fe2OG dioxygenase domain occupies 78–180; it reads QIFPPLFNRY…RVASFFWMQS (103 aa). Positions 98, 100, and 161 each coordinate Fe cation. Arg-171 contacts 2-oxoglutarate.

It depends on Fe(2+) as a cofactor. The cofactor is L-ascorbate.

The sequence is that of PKHD-type hydroxylase BBta_3541 from Bradyrhizobium sp. (strain BTAi1 / ATCC BAA-1182).